The following is a 122-amino-acid chain: MIQMQTNLDVADNSGARRVMCIKVLGGSKRKYAGVGDIIVVSVKEAIPRGRVKKGDVMKAVVVRTAKDVKRADGSVIRFDKNAAVLINNQKEPVGTRIFGPVPRELRARNHMKIISLAPEVL.

Belongs to the universal ribosomal protein uL14 family. As to quaternary structure, part of the 50S ribosomal subunit. Forms a cluster with proteins L3 and L19. In the 70S ribosome, L14 and L19 interact and together make contacts with the 16S rRNA in bridges B5 and B8.

Its function is as follows. Binds to 23S rRNA. Forms part of two intersubunit bridges in the 70S ribosome. In Methylorubrum populi (strain ATCC BAA-705 / NCIMB 13946 / BJ001) (Methylobacterium populi), this protein is Large ribosomal subunit protein uL14.